Consider the following 94-residue polypeptide: MTKSELMEKLSAKQPTLSAKEIENMVKDILEFISQSLENGDRVEVRGFGSFSLHHRQPRLGRNPKTGDSVNLSAKSVPYFKAGKELKARVDVQA.

The protein belongs to the bacterial histone-like protein family. Heterodimer of an alpha and a beta chain.

This protein is one of the two subunits of integration host factor, a specific DNA-binding protein that functions in genetic recombination as well as in transcriptional and translational control. The chain is Integration host factor subunit beta from Haemophilus influenzae (strain 86-028NP).